A 283-amino-acid polypeptide reads, in one-letter code: uncharacterized protein (283 aa).

Solcar repeat units lie at residues 14–95 (QPVW…LKHL), 102–185 (NDHA…SEAV), and 190–274 (GLAL…TLQG). 6 helical membrane-spanning segments follow: residues 20–40 (TLAG…FDVI), 70–90 (GNVV…VAFS), 105–125 (AVNF…SYPL), 157–177 (FFPG…CFFM), 184–204 (AVLS…IAGA), and 249–266 (GLSV…ITML).

It belongs to the mitochondrial carrier (TC 2.A.29) family.

It is found in the mitochondrion inner membrane. This is an uncharacterized protein from Schizosaccharomyces pombe (strain 972 / ATCC 24843) (Fission yeast).